Here is a 130-residue protein sequence, read N- to C-terminus: Small ribosomal subunit protein uS8 (130 aa).

Belongs to the universal ribosomal protein uS8 family. As to quaternary structure, part of the 30S ribosomal subunit.

Functionally, one of the primary rRNA binding proteins, it binds directly to 16S rRNA central domain where it helps coordinate assembly of the platform of the 30S subunit. The polypeptide is Small ribosomal subunit protein uS8 (Methanosarcina barkeri (strain Fusaro / DSM 804)).